The following is a 235-amino-acid chain: Calcium-activated potassium channel subunit beta-2 (235 aa).

The ball and chain stretch occupies residues 1 to 45; the sequence is MFIWTSGRTSSSYRHDEKRNIYQKIRDHDLLDKRKTVTALKAGED. Topologically, residues 1-46 are cytoplasmic; it reads MFIWTSGRTSSSYRHDEKRNIYQKIRDHDLLDKRKTVTALKAGEDR. Residues 47-67 traverse the membrane as a helical segment; sequence AILLGLAMMVCSIMMYFLLGI. Residues 68–194 are Extracellular-facing; it reads TLLRSYMQSV…VILTKLYSSN (127 aa). 3 N-linked (GlcNAc...) asparagine glycosylation sites follow: Asn-88, Asn-96, and Asn-119. The chain crosses the membrane as a helical span at residues 195 to 215; sequence VLFHSLFWPTCMMAGGVAIVA. The Cytoplasmic segment spans residues 216-235; sequence MVKLTQYLSLLCERIQRINR.

This sequence belongs to the KCNMB (TC 8.A.14.1) family. KCNMB2 subfamily. In terms of assembly, interacts with KCNMA1 tetramer. There are probably 4 molecules of KCMNB2 per KCNMA1 tetramer. In terms of processing, N-glycosylated. In terms of tissue distribution, highly expressed in brain and heart. Also expressed in lung.

Its subcellular location is the membrane. Functionally, regulatory subunit of the calcium activated potassium KCNMA1 (maxiK) channel. Modulates the calcium sensitivity and gating kinetics of KCNMA1, thereby contributing to KCNMA1 channel diversity. Acts as a negative regulator that confers rapid and complete inactivation of KCNMA1 channel complex. In Rattus norvegicus (Rat), this protein is Calcium-activated potassium channel subunit beta-2 (Kcnmb2).